A 428-amino-acid polypeptide reads, in one-letter code: MESLTLQPIVHIEGTINLPGSKSVSNRALLLAALAKGKTRLTNLLDSDDIRHMLNALTALGVQYQLSNNNTVCDIEGLAGSFHPQQPLELFLGNAGTAMRPLAAALSLGEHDIVLTGEPRMKERPIGHLVDALRQGGAKIDYLEQTDYPPLRVCGGFSGGSVDVDGTVSSQFLTALLMMAPLAQQDTTITIKGELVSKPYIDITLALINTFGGEIENQNYQRFMIKGGQQYQSPGKYLVEGDASSASYFLAAAAIKGGIVRVTGIGKNSLQGDIHFASVLEKMGATIRWGDDYIECERGKLKGIDMDMNTIPDAAMTIATTALFAEGETTIRNIYNWRVKETDRLSAMATELRKVGAMVDEGRDYLTVIPPKQLTTAEIKTYNDHRIAMCFSLVALSNTPITILDPGCTAKTFPDYFEKLASISHAKV.

Positions 22, 23, and 27 each coordinate 3-phosphoshikimate. Phosphoenolpyruvate is bound at residue K22. Residues G96 and R124 each coordinate phosphoenolpyruvate. 3-phosphoshikimate contacts are provided by S169, S170, Q171, S197, D313, N336, and K340. Q171 contacts phosphoenolpyruvate. D313 functions as the Proton acceptor in the catalytic mechanism. Residues R344, R386, and K411 each coordinate phosphoenolpyruvate.

The protein belongs to the EPSP synthase family. As to quaternary structure, monomer.

The protein resides in the cytoplasm. The catalysed reaction is 3-phosphoshikimate + phosphoenolpyruvate = 5-O-(1-carboxyvinyl)-3-phosphoshikimate + phosphate. The protein operates within metabolic intermediate biosynthesis; chorismate biosynthesis; chorismate from D-erythrose 4-phosphate and phosphoenolpyruvate: step 6/7. In terms of biological role, catalyzes the transfer of the enolpyruvyl moiety of phosphoenolpyruvate (PEP) to the 5-hydroxyl of shikimate-3-phosphate (S3P) to produce enolpyruvyl shikimate-3-phosphate and inorganic phosphate. The chain is 3-phosphoshikimate 1-carboxyvinyltransferase from Proteus mirabilis (strain HI4320).